A 363-amino-acid polypeptide reads, in one-letter code: LIM and cysteine-rich domains protein 1 (363 aa).

Serine 16 is modified (phosphoserine). Positions 99 to 206 constitute a PET domain; it reads MIMTNPIATG…GEVALPGQGG (108 aa). Positions 200-233 are disordered; sequence ALPGQGGLPKEEGKQQEKPEGAETAAPTANGSLG. The span at 208 to 220 shows a compositional bias: basic and acidic residues; that stretch reads PKEEGKQQEKPEG. 2 consecutive LIM zinc-binding domains span residues 239–304 and 305–363; these read YVCE…SLRP and RCSG…SKRT.

Interacts with beta-dystroglycan. Interacts with GATA1, GATA4 and GATA6. As to expression, highly expressed in both skeletal muscle and cardiac muscle.

The protein localises to the cytoplasm. The protein resides in the nucleus. Transcriptional cofactor that restricts GATA6 function by inhibiting DNA-binding, resulting in repression of GATA6 transcriptional activation of downstream target genes. Represses GATA6-mediated trans activation of lung- and cardiac tissue-specific promoters. Inhibits DNA-binding by GATA4 and GATA1 to the cTNC promoter. Plays a critical role in the development of cardiac hypertrophy via activation of calcineurin/nuclear factor of activated T-cells signaling pathway. The chain is LIM and cysteine-rich domains protein 1 (LMCD1) from Sus scrofa (Pig).